We begin with the raw amino-acid sequence, 91 residues long: Cell division topological specificity factor (91 aa).

Belongs to the MinE family.

Prevents the cell division inhibition by proteins MinC and MinD at internal division sites while permitting inhibition at polar sites. This ensures cell division at the proper site by restricting the formation of a division septum at the midpoint of the long axis of the cell. This Caldanaerobacter subterraneus subsp. tengcongensis (strain DSM 15242 / JCM 11007 / NBRC 100824 / MB4) (Thermoanaerobacter tengcongensis) protein is Cell division topological specificity factor.